We begin with the raw amino-acid sequence, 206 residues long: Sclerostin domain-containing protein 1 (206 aa).

The N-terminal stretch at 1-23 is a signal peptide; it reads MLPPAIHLSLIPLLCILMRNCLA. A disordered region spans residues 42–62; that stretch reads AHPSSNSTLNQARNGGRHFSS. A compositionally biased stretch (polar residues) spans 44–62; it reads PSSNSTLNQARNGGRHFSS. N-linked (GlcNAc...) asparagine glycosylation occurs at Asn-47. 4 cysteine pairs are disulfide-bonded: Cys-75–Cys-133, Cys-89–Cys-147, Cys-100–Cys-163, and Cys-104–Cys-165. A CTCK domain is found at 75 to 170; sequence CRELRSTKYI…TACKCKRYTR (96 aa). Residue Asn-173 is glycosylated (N-linked (GlcNAc...) asparagine). A disordered region spans residues 176-206; that stretch reads SHNFESVSPAKPAQHHRERKRASKSSKHSLS. Basic residues predominate over residues 188-206; sequence AQHHRERKRASKSSKHSLS.

This sequence belongs to the sclerostin family. In terms of assembly, interacts with BMP2, BMP4, BMP6 and BMP7 with high affinity. As to expression, highly expressed in kidney at renal collecting ducts level and weakly in brain.

The protein localises to the secreted. May be involved in the onset of endometrial receptivity for implantation/sensitization for the decidual cell reaction. Enhances Wnt signaling and inhibits TGF-beta signaling. Directly antagonizes activity of BMP2, BMP4, BMP6 and BMP7 in a dose-dependent manner. The sequence is that of Sclerostin domain-containing protein 1 (Sostdc1) from Mus musculus (Mouse).